A 617-amino-acid polypeptide reads, in one-letter code: Protein fem-1 homolog C (617 aa).

Methionine 1 bears the N-acetylmethionine mark. 7 ANK repeats span residues 2–31 (DLKTAVFNAARDGKLRLLTKLLASKSKEEV), 40–70 (NGATPLLMAARYGHLDMVEFLLEQCSASIEV), 82–111 (EGAPPLWAASAAGHLKVVQSLLNHGASVNN), 115–144 (TNSTPLRAACFDGHLEIVKYLVEHKADLEV), 148–177 (HGHTCLMISCYKGHKEIAQYLLEKGADVNR), 181–210 (KGNTALHDCAESGSLDIMKMLLMYCAKMEK), and 213–242 (YGMTPLLSASVTGHTNIVDFLTHHAQTSKT). 2 TPR repeats span residues 245 to 279 (INALELLGATFVDKKRDLLGALKYWKKAMNMRYSD) and 338 to 371 (SYYIRYRGAVYADSGNFKRCINLWKYALDMQQNN). ANK repeat units lie at residues 481–523 (NNFS…DVNV) and 527–556 (DDNSPLHIAALNNHPDIMNLLIKSGAHFDA).

This sequence belongs to the fem-1 family. In terms of assembly, component of a CRL2 E3 ubiquitin-protein ligase complex, also named ECS (Elongin BC-CUL2/5-SOCS-box protein) complex, composed of CUL2, Elongin BC (ELOB and ELOC), RBX1 and substrate-specific adapter FEM1C.

It participates in protein modification; protein ubiquitination. Substrate-recognition component of a Cul2-RING (CRL2) E3 ubiquitin-protein ligase complex of the DesCEND (destruction via C-end degrons) pathway, which recognizes a C-degron located at the extreme C terminus of target proteins, leading to their ubiquitination and degradation. The C-degron recognized by the DesCEND pathway is usually a motif of less than ten residues and can be present in full-length proteins, truncated proteins or proteolytically cleaved forms. The CRL2(FEM1C) complex specifically recognizes proteins with an arginine at the C-terminus: recognizes and binds proteins ending with -Lys/Arg-Xaa-Arg and -Lys/Arg-Xaa-Xaa-Arg C-degrons, such as SIL1 or OR51B2, leading to their ubiquitination and degradation. The CRL2(FEM1C) complex mediates ubiquitination and degradation of truncated MSRB1/SEPX1 selenoproteins produced by failed UGA/Sec decoding. The sequence is that of Protein fem-1 homolog C from Bos taurus (Bovine).